Here is a 109-residue protein sequence, read N- to C-terminus: Putative RNase MJ1380 (109 aa).

Catalysis depends on residues Arg-76 and His-81. The RX(4)HXY motif motif lies at 76-83 (RNILIHKY). Tyr-83 bears the O-di-AMP-tyrosine mark.

The protein belongs to the HepT RNase toxin family. As to quaternary structure, homodimer, probably forms a complex with cognate antitoxin MJ1379. Modified by cognate antitoxin MJ1379; probably at least 2 successive AMPylation events occur on Tyr-83.

Its function is as follows. Probable toxic component of a putative type VII toxin-antitoxin (TA) system, probably an RNase. Probably neutralized by cognate antitoxin MJ1379. Neutralization may be due to AMPylation by antitoxin MJ1379. The sequence is that of Putative RNase MJ1380 from Methanocaldococcus jannaschii (strain ATCC 43067 / DSM 2661 / JAL-1 / JCM 10045 / NBRC 100440) (Methanococcus jannaschii).